Here is a 90-residue protein sequence, read N- to C-terminus: Small ribosomal subunit protein bS20 (90 aa).

The segment at 1–27 is disordered; sequence MANSAQAKKRARQNEKRELHNASQRSA.

The protein belongs to the bacterial ribosomal protein bS20 family.

Its function is as follows. Binds directly to 16S ribosomal RNA. The protein is Small ribosomal subunit protein bS20 of Coxiella burnetii (strain CbuK_Q154) (Coxiella burnetii (strain Q154)).